The following is a 358-amino-acid chain: F-box only protein 25 (358 aa).

The interval 1-83 is interaction with beta-actin; sequence MPFLGQDWRS…NDTNTQSFYR (83 aa). Positions 226 to 274 constitute an F-box domain; sequence LTLSDLPLHMLNNILYRFSDGWDIITLGQVTPTLYMLSEDRQLWKKLCQ.

As to quaternary structure, part of a SCF (SKP1-cullin-F-box) protein ligase complex consisting of FBXO25, SKP1, CUL1 and RBX1. Interacts directly with SKP1 and CUL1. Interacts (via C-terminus) with beta-actin (via N-terminus).

It is found in the nucleus. It functions in the pathway protein modification; protein ubiquitination. In terms of biological role, substrate-recognition component of the SCF (SKP1-CUL1-F-box protein)-type E3 ubiquitin ligase complex. May play a role in accumulation of expanded polyglutamine (polyQ) protein huntingtin (HTT). This chain is F-box only protein 25 (FBXO25), found in Macaca fascicularis (Crab-eating macaque).